Here is a 189-residue protein sequence, read N- to C-terminus: Ras-like protein 1 (189 aa).

Position 10-17 (10-17 (GAGGVGKS)) interacts with GTP. The short motif at 32-40 (YDPTIEDSY) is the Effector region element. GTP contacts are provided by residues 57–61 (DTAGQ) and 116–119 (NKCD). Cys-186 bears the Cysteine methyl ester mark. Residue Cys-186 is the site of S-geranylgeranyl cysteine attachment. Residues 187–189 (KML) constitute a propeptide, removed in mature form.

This sequence belongs to the small GTPase superfamily. Ras family.

The protein resides in the cell membrane. It carries out the reaction GTP + H2O = GDP + phosphate + H(+). With respect to regulation, alternates between an inactive form bound to GDP and an active form bound to GTP. Activated by a guanine nucleotide-exchange factor (GEF) and inactivated by a GTPase-activating protein (GAP). Functionally, ras proteins bind GDP/GTP and possess intrinsic GTPase activity. Plays a role in eye development by regulating cell growth, survival of postmitotic ommatidial cells and differentiation of photoreceptor cells. During larval development, mediates Ptth/tor signaling leading to the production of ecdysone, a hormone required for the initiation of metamorphosis. The chain is Ras-like protein 1 from Drosophila ananassae (Fruit fly).